We begin with the raw amino-acid sequence, 93 residues long: MPRSLKKGPFVDGHLLKKVDAQNEKNTKQVIKTWSRRSTIIPDFIGHTFAVHDGRKHVPVFVTEAMVGHKLGEFAPTRTFKGHIKDDRKAKRR.

It belongs to the universal ribosomal protein uS19 family.

In terms of biological role, protein S19 forms a complex with S13 that binds strongly to the 16S ribosomal RNA. The chain is Small ribosomal subunit protein uS19 from Mycolicibacterium paratuberculosis (strain ATCC BAA-968 / K-10) (Mycobacterium paratuberculosis).